We begin with the raw amino-acid sequence, 280 residues long: Protein MGF 505-3R (280 aa).

It belongs to the asfivirus MGF 505 family.

Plays a role in virus cell tropism, and may be required for efficient virus replication in macrophages. The polypeptide is Protein MGF 505-3R (African swine fever virus (isolate Warthog/Namibia/Wart80/1980) (ASFV)).